The following is a 495-amino-acid chain: MEFIKKLEVWFIVGSQDLYGDEALKQVYANAKQITQYLNSRNPFIQIKLKPLATTPEDILAICRAANYEENCAGVIAWMHTFSPAKMWIAGLTRLDKPLLQFHTQFNKYIPWNEIDMDYMNLHQTAHGDREFGFMVSRLRKPRTIVVGHWQSESVKQKLDRWMRVLAAIYDQQHLKVARFGDNMREVAVTEGDKVEAQIKFGYSVNGYGIYQLVNSINAIKEEDIATLVKEYEADYQLVDSLKEGGEKRQSLIDSARIELGLKAFLDKGGFKAFTDTFQNLYGMKQLPGLPVQRLMAQGYGFGAEGDWKTAALVRAIKVMSYGLPNGCSFMEDYTYNLEDHNEVVLAAHMLEVCPSIAEDKPILDIKPLGIGGKEDPTRLIFTSKAGCATASTIVDLGNRFRMITAELQAIAKPQDMPNLPVGHAFWKLEPDFDTGTQAWILAGGAHHNVFSLDIDADMLRTFAEYFGIEFIHIHAKTELADLKNELRWNDVAYK.

Mn(2+) contacts are provided by E305, E332, H349, and H448.

The protein belongs to the arabinose isomerase family. Mn(2+) is required as a cofactor.

The enzyme catalyses beta-L-arabinopyranose = L-ribulose. The protein operates within carbohydrate degradation; L-arabinose degradation via L-ribulose; D-xylulose 5-phosphate from L-arabinose (bacterial route): step 1/3. In terms of biological role, catalyzes the conversion of L-arabinose to L-ribulose. The polypeptide is L-arabinose isomerase (Actinobacillus succinogenes (strain ATCC 55618 / DSM 22257 / CCUG 43843 / 130Z)).